Here is a 300-residue protein sequence, read N- to C-terminus: Ribosomal protein L11 methyltransferase (300 aa).

S-adenosyl-L-methionine is bound by residues Thr-141, Gly-164, Asp-186, and Asn-233.

Belongs to the methyltransferase superfamily. PrmA family.

The protein resides in the cytoplasm. It catalyses the reaction L-lysyl-[protein] + 3 S-adenosyl-L-methionine = N(6),N(6),N(6)-trimethyl-L-lysyl-[protein] + 3 S-adenosyl-L-homocysteine + 3 H(+). In terms of biological role, methylates ribosomal protein L11. The polypeptide is Ribosomal protein L11 methyltransferase (Synechocystis sp. (strain ATCC 27184 / PCC 6803 / Kazusa)).